The primary structure comprises 359 residues: 3-dehydroquinate synthase (359 aa).

Residues 71 to 76 (DGEQHK), 105 to 109 (GVIGD), 129 to 130 (TT), lysine 142, and lysine 151 each bind NAD(+). Zn(2+) is bound by residues glutamate 184, histidine 247, and histidine 264.

The protein belongs to the sugar phosphate cyclases superfamily. Dehydroquinate synthase family. The cofactor is NAD(+). Requires Co(2+) as cofactor. It depends on Zn(2+) as a cofactor.

The protein localises to the cytoplasm. It catalyses the reaction 7-phospho-2-dehydro-3-deoxy-D-arabino-heptonate = 3-dehydroquinate + phosphate. It participates in metabolic intermediate biosynthesis; chorismate biosynthesis; chorismate from D-erythrose 4-phosphate and phosphoenolpyruvate: step 2/7. Its function is as follows. Catalyzes the conversion of 3-deoxy-D-arabino-heptulosonate 7-phosphate (DAHP) to dehydroquinate (DHQ). This Chromobacterium violaceum (strain ATCC 12472 / DSM 30191 / JCM 1249 / CCUG 213 / NBRC 12614 / NCIMB 9131 / NCTC 9757 / MK) protein is 3-dehydroquinate synthase.